The primary structure comprises 154 residues: ORF3b protein (154 aa).

The tract at residues leucine 80–lysine 138 is mitochondrial targeting signal. The nucleolar targeting stretch occupies residues cysteine 134 to arginine 154. Residues lysine 135 to valine 153 carry the Bipartite nuclear localization signal motif.

Interacts with host RUNX1 isoform b.

It is found in the host nucleus. Its subcellular location is the host nucleolus. The protein localises to the host mitochondrion. In terms of biological role, induces host cell G0/G1 arrest and apoptosis. The protein is ORF3b protein of Homo sapiens (Human).